A 197-amino-acid chain; its full sequence is Recombination protein RecR (197 aa).

Residues 56–71 (CKRCGSYAETEICNIC) form a C4-type zinc finger. A Toprim domain is found at 79-174 (HTFCVVEQPE…DVTRIAYGIT (96 aa)).

Belongs to the RecR family.

May play a role in DNA repair. It seems to be involved in an RecBC-independent recombinational process of DNA repair. It may act with RecF and RecO. This chain is Recombination protein RecR, found in Leptospira borgpetersenii serovar Hardjo-bovis (strain JB197).